Here is a 356-residue protein sequence, read N- to C-terminus: Phosphoribosylformylglycinamidine cyclo-ligase (356 aa).

The protein belongs to the AIR synthase family.

The protein resides in the cytoplasm. The catalysed reaction is 2-formamido-N(1)-(5-O-phospho-beta-D-ribosyl)acetamidine + ATP = 5-amino-1-(5-phospho-beta-D-ribosyl)imidazole + ADP + phosphate + H(+). Its pathway is purine metabolism; IMP biosynthesis via de novo pathway; 5-amino-1-(5-phospho-D-ribosyl)imidazole from N(2)-formyl-N(1)-(5-phospho-D-ribosyl)glycinamide: step 2/2. This Nitrobacter hamburgensis (strain DSM 10229 / NCIMB 13809 / X14) protein is Phosphoribosylformylglycinamidine cyclo-ligase.